The chain runs to 147 residues: uncharacterized protein (147 aa).

One can recognise a Response regulatory domain in the interval 1 to 59 (MGAELVKWVKSHKIDAHIITFVAKMPYIDSIKLLEAGAKGCVWKTSHPAKLNRAIDSIS). In terms of domain architecture, HTH luxR-type spans 78–143 (RYSSDNQLTN…ELIKTALRMG (66 aa)). Residues 102–121 (NKEIANFLQLSRKTVETHRL) constitute a DNA-binding region (H-T-H motif).

In terms of processing, overexpressed protein is phosphorylated in vitro by non-cognate histidine kinases BarA and UhpB.

This is an uncharacterized protein from Escherichia coli (strain K12).